Reading from the N-terminus, the 553-residue chain is Glucose-6-phosphate isomerase (553 aa).

The Proton donor role is filled by Glu357. Residues His388 and Lys514 contribute to the active site. The segment at 527-553 is disordered; it reads ADSPAAQSDSSTDALVRRYRTERGRTA. Basic and acidic residues predominate over residues 541 to 553; that stretch reads LVRRYRTERGRTA.

The protein belongs to the GPI family.

The protein localises to the cytoplasm. It carries out the reaction alpha-D-glucose 6-phosphate = beta-D-fructose 6-phosphate. It participates in carbohydrate biosynthesis; gluconeogenesis. Its pathway is carbohydrate degradation; glycolysis; D-glyceraldehyde 3-phosphate and glycerone phosphate from D-glucose: step 2/4. Functionally, catalyzes the reversible isomerization of glucose-6-phosphate to fructose-6-phosphate. In Mycolicibacterium vanbaalenii (strain DSM 7251 / JCM 13017 / BCRC 16820 / KCTC 9966 / NRRL B-24157 / PYR-1) (Mycobacterium vanbaalenii), this protein is Glucose-6-phosphate isomerase.